Consider the following 290-residue polypeptide: MLRVVLITGISGSGKSVALRMLEDSGFTCVDNLPLRFLTEFVAVSHDDGMERVAVAIDVRSPGELAELPNVITALRAMGTQLSVVFLDASTETLAQRYSESRRRHPLTDRASRGEKSASLTDCIALERELLAPLRDQEHVIDTTDLTPGQLRSWIRELIDADRAPLVLTFQSFAYKRGVPNDADLVFDVRCLPNPYYDRNLRPLTGRDQPVADWLAGFEIVQRMIDDIDGFIRRWLPQYTLDTRNYLTVAVGCTGGQHRSVYVVEELARRFSEHDPLLVRHRTQLPDESA.

9-16 (GISGSGKS) is an ATP binding site. 58-61 (DVRS) serves as a coordination point for GTP.

It belongs to the RapZ-like family.

Functionally, displays ATPase and GTPase activities. This Bordetella avium (strain 197N) protein is Nucleotide-binding protein BAV3158.